A 131-amino-acid chain; its full sequence is Histone H2A.2 (131 aa).

S2 carries the N-acetylserine modification. N6-acetyllysine occurs at positions 5 and 8. At Q106 the chain carries N5-methylglutamine. S128 is modified (phosphoserine). The [ST]-Q motif motif lies at 128-129; it reads SQ.

Belongs to the histone H2A family. The nucleosome is a histone octamer containing two molecules each of H2A, H2B, H3 and H4 assembled in one H3-H4 heterotetramer and two H2A-H2B heterodimers. The octamer wraps approximately 147 bp of DNA. In terms of processing, phosphorylated to form H2AS128ph (gamma-H2A) in response to DNA double-strand breaks (DSBs) generated by exogenous genotoxic agents and by stalled replication forks. Phosphorylation is dependent on the DNA damage checkpoint kinases MEC1/ATR and TEL1/ATM, spreads on either side of a detected DSB site and may mark the surrounding chromatin for recruitment of proteins required for DNA damage signaling and repair. Gamma-H2A is removed from the DNA prior to the strand invasion-primer extension step of the repair process and subsequently dephosphorylated by PPH3, a component of the histone H2A phosphatase complex (HTP-C). Dephosphorylation is necessary for efficient recovery from the DNA damage checkpoint. Acetylated by ESA1 to form H2AK4ac and H2AK7ac.

It is found in the nucleus. The protein localises to the chromosome. Its function is as follows. Core component of nucleosome which plays a central role in DNA double strand break (DSB) repair. Nucleosomes wrap and compact DNA into chromatin, limiting DNA accessibility to the cellular machineries which require DNA as a template. Histones thereby play a central role in transcription regulation, DNA repair, DNA replication and chromosomal stability. DNA accessibility is regulated via a complex set of post-translational modifications of histones, also called histone code, and nucleosome remodeling. In Candida glabrata (strain ATCC 2001 / BCRC 20586 / JCM 3761 / NBRC 0622 / NRRL Y-65 / CBS 138) (Yeast), this protein is Histone H2A.2 (HTA2).